A 287-amino-acid chain; its full sequence is Uroporphyrinogen-III C-methyltransferase (287 aa).

Residues Met1–Ala10 are compositionally biased toward polar residues. The disordered stretch occupies residues Met1 to Val24. S-adenosyl-L-methionine is bound by residues Pro40, Gly116–Asp118, Thr146, and Met199.

This sequence belongs to the precorrin methyltransferase family.

It catalyses the reaction uroporphyrinogen III + 2 S-adenosyl-L-methionine = precorrin-2 + 2 S-adenosyl-L-homocysteine + H(+). Its pathway is porphyrin-containing compound metabolism; siroheme biosynthesis; precorrin-2 from uroporphyrinogen III: step 1/1. Catalyzes the methylation of both C-2 and C-7 of uroporphyrinogen III leading to precorrin-1 and precorrin-2; their oxidative esterification gives respectively factor I octamethyl ester and sirohydrochlorin. Inactivation of uroporphyrinogen-III methyltransferase results in the loss of nitrite and nitric oxide reductase activities, but not of nitrous oxide reductase activity. Likely involved in heme D1 biosynthesis. This chain is Uroporphyrinogen-III C-methyltransferase (nirE), found in Paracoccus denitrificans (strain Pd 1222).